Reading from the N-terminus, the 115-residue chain is Large ribosomal subunit protein bL20 (115 aa).

This sequence belongs to the bacterial ribosomal protein bL20 family.

In terms of biological role, binds directly to 23S ribosomal RNA and is necessary for the in vitro assembly process of the 50S ribosomal subunit. It is not involved in the protein synthesizing functions of that subunit. The chain is Large ribosomal subunit protein bL20 from Borrelia garinii subsp. bavariensis (strain ATCC BAA-2496 / DSM 23469 / PBi) (Borreliella bavariensis).